A 359-amino-acid chain; its full sequence is DNA polymerase IV (359 aa).

The region spanning 7–188 is the UmuC domain; sequence IIHIDMDAFY…IPIGKFFGVG (182 aa). Mg(2+) contacts are provided by D11 and D106. E107 is an active-site residue.

The protein belongs to the DNA polymerase type-Y family. Monomer. Mg(2+) is required as a cofactor.

It localises to the cytoplasm. The enzyme catalyses DNA(n) + a 2'-deoxyribonucleoside 5'-triphosphate = DNA(n+1) + diphosphate. Its function is as follows. Poorly processive, error-prone DNA polymerase involved in untargeted mutagenesis. Copies undamaged DNA at stalled replication forks, which arise in vivo from mismatched or misaligned primer ends. These misaligned primers can be extended by PolIV. Exhibits no 3'-5' exonuclease (proofreading) activity. May be involved in translesional synthesis, in conjunction with the beta clamp from PolIII. The sequence is that of DNA polymerase IV from Clostridium perfringens (strain ATCC 13124 / DSM 756 / JCM 1290 / NCIMB 6125 / NCTC 8237 / Type A).